The chain runs to 172 residues: Co-chaperone protein HscB homolog (172 aa).

Residues 2-69 enclose the J domain; the sequence is NHFELFNLPV…DSRAAYLLAL (68 aa).

This sequence belongs to the HscB family. Interacts with HscA and stimulates its ATPase activity.

Co-chaperone involved in the maturation of iron-sulfur cluster-containing proteins. Seems to help targeting proteins to be folded toward HscA. The protein is Co-chaperone protein HscB homolog of Acinetobacter baumannii (strain SDF).